A 336-amino-acid chain; its full sequence is MAVIYYDKDADLELIRDKKIAIIGYGSQGHAHALNLKDSGLNVVVGLREGSKSWKKAEEQGLTVKAIEEAAKEADIIMMLIPDENQPEIYKKYIEKHLTEGKMLMFAHGFNIHYHQIIPPKNVDVTMIAPKSPGHIVRREYVEGRGVPALVAVYQDYTGKAKDIALAYAKGIGVTRAGVIETTFKEETETDLFGEQAVLCGGVTALIKAGFETLVEAGYQPEIAYFECLNELKLIVDLIYEGGLSFMRYSVSNTAEYGDYISQEKIVTKEVRENMKQMLKDIQTGKFAKDWILENQAGRPYFYTMRKKESEHLIEKVGKELRKMMPWLKERNVDEE.

One can recognise a KARI N-terminal Rossmann domain in the interval 1 to 182 (MAVIYYDKDA…GVTRAGVIET (182 aa)). NADP(+) contacts are provided by residues 25-28 (YGSQ), arginine 48, serine 51, serine 53, and 83-86 (DENQ). Histidine 108 is an active-site residue. Glycine 134 lines the NADP(+) pocket. The 146-residue stretch at 183–328 (TFKEETETDL…KELRKMMPWL (146 aa)) folds into the KARI C-terminal knotted domain. 4 residues coordinate Mg(2+): aspartate 191, glutamate 195, glutamate 227, and glutamate 231. Serine 252 provides a ligand contact to substrate.

It belongs to the ketol-acid reductoisomerase family. Mg(2+) is required as a cofactor.

The enzyme catalyses (2R)-2,3-dihydroxy-3-methylbutanoate + NADP(+) = (2S)-2-acetolactate + NADPH + H(+). It carries out the reaction (2R,3R)-2,3-dihydroxy-3-methylpentanoate + NADP(+) = (S)-2-ethyl-2-hydroxy-3-oxobutanoate + NADPH + H(+). The protein operates within amino-acid biosynthesis; L-isoleucine biosynthesis; L-isoleucine from 2-oxobutanoate: step 2/4. It participates in amino-acid biosynthesis; L-valine biosynthesis; L-valine from pyruvate: step 2/4. Functionally, involved in the biosynthesis of branched-chain amino acids (BCAA). Catalyzes an alkyl-migration followed by a ketol-acid reduction of (S)-2-acetolactate (S2AL) to yield (R)-2,3-dihydroxy-isovalerate. In the isomerase reaction, S2AL is rearranged via a Mg-dependent methyl migration to produce 3-hydroxy-3-methyl-2-ketobutyrate (HMKB). In the reductase reaction, this 2-ketoacid undergoes a metal-dependent reduction by NADPH to yield (R)-2,3-dihydroxy-isovalerate. This is Ketol-acid reductoisomerase (NADP(+)) from Thermotoga petrophila (strain ATCC BAA-488 / DSM 13995 / JCM 10881 / RKU-1).